The following is a 351-amino-acid chain: UDP-N-acetylglucosamine--N-acetylmuramyl-(pentapeptide) pyrophosphoryl-undecaprenol N-acetylglucosamine transferase (351 aa).

UDP-N-acetyl-alpha-D-glucosamine-binding positions include 12–14 (TGG), Asn-124, Arg-160, Ser-188, Ile-239, 258–263 (ALTVCE), and Gln-283.

This sequence belongs to the glycosyltransferase 28 family. MurG subfamily.

The protein localises to the cell inner membrane. It catalyses the reaction di-trans,octa-cis-undecaprenyl diphospho-N-acetyl-alpha-D-muramoyl-L-alanyl-D-glutamyl-meso-2,6-diaminopimeloyl-D-alanyl-D-alanine + UDP-N-acetyl-alpha-D-glucosamine = di-trans,octa-cis-undecaprenyl diphospho-[N-acetyl-alpha-D-glucosaminyl-(1-&gt;4)]-N-acetyl-alpha-D-muramoyl-L-alanyl-D-glutamyl-meso-2,6-diaminopimeloyl-D-alanyl-D-alanine + UDP + H(+). Its pathway is cell wall biogenesis; peptidoglycan biosynthesis. Functionally, cell wall formation. Catalyzes the transfer of a GlcNAc subunit on undecaprenyl-pyrophosphoryl-MurNAc-pentapeptide (lipid intermediate I) to form undecaprenyl-pyrophosphoryl-MurNAc-(pentapeptide)GlcNAc (lipid intermediate II). The protein is UDP-N-acetylglucosamine--N-acetylmuramyl-(pentapeptide) pyrophosphoryl-undecaprenol N-acetylglucosamine transferase of Actinobacillus pleuropneumoniae serotype 5b (strain L20).